We begin with the raw amino-acid sequence, 177 residues long: Large ribosomal subunit protein uL6 (177 aa).

It belongs to the universal ribosomal protein uL6 family. As to quaternary structure, part of the 50S ribosomal subunit.

Functionally, this protein binds to the 23S rRNA, and is important in its secondary structure. It is located near the subunit interface in the base of the L7/L12 stalk, and near the tRNA binding site of the peptidyltransferase center. The sequence is that of Large ribosomal subunit protein uL6 from Aromatoleum aromaticum (strain DSM 19018 / LMG 30748 / EbN1) (Azoarcus sp. (strain EbN1)).